A 924-amino-acid polypeptide reads, in one-letter code: LPS-assembly protein LptD (924 aa).

The first 33 residues, M1–A33, serve as a signal peptide directing secretion. The segment at N58–R102 is disordered. Over residues T66–E90 the composition is skewed to low complexity.

This sequence belongs to the LptD family. Component of the lipopolysaccharide transport and assembly complex. Interacts with LptE and LptA.

The protein localises to the cell outer membrane. Functionally, together with LptE, is involved in the assembly of lipopolysaccharide (LPS) at the surface of the outer membrane. This chain is LPS-assembly protein LptD, found in Pseudomonas aeruginosa (strain UCBPP-PA14).